Reading from the N-terminus, the 201-residue chain is Small ribosomal subunit protein uS4c (201 aa).

In terms of domain architecture, S4 RNA-binding spans 89–152 (MRLDNILFRL…NSRTLVQNLI (64 aa)).

It belongs to the universal ribosomal protein uS4 family. In terms of assembly, part of the 30S ribosomal subunit. Contacts protein S5. The interaction surface between S4 and S5 is involved in control of translational fidelity.

Its subcellular location is the plastid. The protein resides in the chloroplast. One of the primary rRNA binding proteins, it binds directly to 16S rRNA where it nucleates assembly of the body of the 30S subunit. Its function is as follows. With S5 and S12 plays an important role in translational accuracy. The polypeptide is Small ribosomal subunit protein uS4c (rps4) (Crucihimalaya wallichii (Rock-cress)).